Reading from the N-terminus, the 621-residue chain is Protein CASP (621 aa).

The Cytoplasmic portion of the chain corresponds to 1–574 (MEIVSRAWES…ILATPKSRTV (574 aa)). 2 coiled-coil regions span residues 101–445 (LLKG…VQDI) and 473–525 (ILTS…FLQS). The chain crosses the membrane as a helical; Anchor for type IV membrane protein span at residues 575 to 595 (FFSYLLILHALIMLVLYKFAF). The Lumenal segment spans residues 596 to 621 (DQSVVRDAETECEYKFHQHMLDNHKQ).

It belongs to the CASP family.

Its subcellular location is the golgi apparatus membrane. Functionally, may be involved in intra-Golgi retrograde transport. In Caenorhabditis elegans, this protein is Protein CASP (ceh-44).